The primary structure comprises 201 residues: MDADSSSRSPRDTRTCARPKEKVPYFADEGRERDRVRNLRHRKTSITRPTTSHRGRPMRARSRSYSAERNCCQRRRRSRSCERRHSDTRHKLTTATVTKQRRRRSRSRSRSRSRTPRIITVPVPVPAADYPYAYAWPPPPQAPQFNPMYGAVPYGMPSRPVYPAHPYFAPYPRPRLTFPYRAPPFRPHPRFSYRNQRPAPN.

The segment at 1–117 (MDADSSSRSP…RSRSRSRTPR (117 aa)) is disordered. Residues 9–37 (SPRDTRTCARPKEKVPYFADEGRERDRVR) are compositionally biased toward basic and acidic residues. 2 stretches are compositionally biased toward basic residues: residues 38-62 (NLRH…RARS) and 99-115 (KQRR…RSRT).

It is found in the nucleus speckle. Its function is as follows. Member of the regulatory pathway controlling female somatic sexual differentiation, regulated by Sxl. Activates dsx female-specific splicing by promoting the formation of a splicing enhancer complex which consists of tra, tra2 and sr proteins. The polypeptide is Female-specific protein transformer (tra) (Drosophila hydei (Fruit fly)).